The sequence spans 218 residues: Thiopurine S-methyltransferase (218 aa).

S-adenosyl-L-methionine is bound by residues Trp10, Leu45, Glu66, and Arg123.

Belongs to the class I-like SAM-binding methyltransferase superfamily. TPMT family.

It is found in the cytoplasm. The enzyme catalyses S-adenosyl-L-methionine + a thiopurine = S-adenosyl-L-homocysteine + a thiopurine S-methylether.. In Xanthomonas axonopodis pv. citri (strain 306), this protein is Thiopurine S-methyltransferase.